The following is a 325-amino-acid chain: Probable serine/threonine-protein phosphatase 2A activator 1 (325 aa).

This sequence belongs to the PTPA-type PPIase family.

Its subcellular location is the cytoplasm. It catalyses the reaction [protein]-peptidylproline (omega=180) = [protein]-peptidylproline (omega=0). Functionally, PPIases accelerate the folding of proteins. It catalyzes the cis-trans isomerization of proline imidic peptide bonds in oligopeptides. Acts as a regulatory subunit for PP2A-like phosphatases modulating their activity or substrate specificity, probably by inducing a conformational change in the catalytic subunit, a direct target of the PPIase. This is Probable serine/threonine-protein phosphatase 2A activator 1 (ppp2r4A) from Dictyostelium discoideum (Social amoeba).